Reading from the N-terminus, the 415-residue chain is Leucine-rich repeat-containing protein 34 (415 aa).

2 LRR repeats span residues 246-272 (SLRY…LKSN) and 274-296 (TLEV…LSET).

In terms of assembly, interacts with NPM1 and NCL. Expressed in testis where it specifically localizes to germ cells (at protein level). Not detected in other tissues tested (at protein level). Expressed in pluripotent embryonic stem cells and multipotent adult germline stem cells.

It is found in the nucleus. The protein localises to the nucleolus. Its subcellular location is the cytoplasm. Highly expressed in stem cells where it may be involved in regulation of pluripotency. In embryonic stem cells (ESCs), important for normal expression of the pluripotency regulators POU5F1/OCT4 and KLF4. Also important for expression of the ectodermal marker gene NES and the endodermal marker gene GATA4. Promotes stem cell proliferation in vitro. This is Leucine-rich repeat-containing protein 34 from Mus musculus (Mouse).